The primary structure comprises 555 residues: Oligo-1,6-glucosidase (555 aa).

The Nucleophile role is filled by D199. Catalysis depends on E255, which acts as the Proton donor.

This sequence belongs to the glycosyl hydrolase 13 family.

Its subcellular location is the cytoplasm. It catalyses the reaction Hydrolysis of (1-&gt;6)-alpha-D-glucosidic linkages in some oligosaccharides produced from starch and glycogen by alpha-amylase, and in isomaltose.. The sequence is that of Oligo-1,6-glucosidase (malL) from Heyndrickxia coagulans (Weizmannia coagulans).